Reading from the N-terminus, the 447-residue chain is Na(+)-translocating NADH-quinone reductase subunit A (447 aa).

It belongs to the NqrA family. In terms of assembly, composed of six subunits; NqrA, NqrB, NqrC, NqrD, NqrE and NqrF.

The catalysed reaction is a ubiquinone + n Na(+)(in) + NADH + H(+) = a ubiquinol + n Na(+)(out) + NAD(+). Functionally, NQR complex catalyzes the reduction of ubiquinone-1 to ubiquinol by two successive reactions, coupled with the transport of Na(+) ions from the cytoplasm to the periplasm. NqrA to NqrE are probably involved in the second step, the conversion of ubisemiquinone to ubiquinol. The sequence is that of Na(+)-translocating NADH-quinone reductase subunit A from Neisseria gonorrhoeae (strain ATCC 700825 / FA 1090).